The following is a 346-amino-acid chain: Tyrosine--tRNA ligase (346 aa).

Tyr-35 serves as a coordination point for L-tyrosine. The 'HIGH' region signature appears at 40–48 (PTGEMHIGH). Residues Tyr-162, Gln-166, Asp-169, and Gln-184 each contribute to the L-tyrosine site.

It belongs to the class-I aminoacyl-tRNA synthetase family. TyrS type 3 subfamily. As to quaternary structure, homodimer.

Its subcellular location is the cytoplasm. It carries out the reaction tRNA(Tyr) + L-tyrosine + ATP = L-tyrosyl-tRNA(Tyr) + AMP + diphosphate + H(+). In terms of biological role, catalyzes the attachment of tyrosine to tRNA(Tyr) in a two-step reaction: tyrosine is first activated by ATP to form Tyr-AMP and then transferred to the acceptor end of tRNA(Tyr). The protein is Tyrosine--tRNA ligase of Haloarcula marismortui (strain ATCC 43049 / DSM 3752 / JCM 8966 / VKM B-1809) (Halobacterium marismortui).